The following is a 203-amino-acid chain: Large ribosomal subunit protein uL13 (203 aa).

At Ala-2 the chain carries N-acetylalanine. The residue at position 59 (Arg-59) is a Citrulline. Phosphoserine is present on Ser-77. Citrulline is present on Arg-140. Lys-191 carries the N6-acetyllysine modification.

Belongs to the universal ribosomal protein uL13 family. Component of the 60S ribosome. Component of the GAIT complex. Interacts with EIF4G1. Phosphorylation at Ser-77 upon interferon-gamma treatment in monocytes involves a DAPK1-DAPK3 kinase cascade and is causing release from the ribosome, association with the GAIT complex and subsequent involvement in transcript-selective translation inhibition. In terms of processing, citrullinated by PADI4.

It localises to the cytoplasm. Its function is as follows. Associated with ribosomes but is not required for canonical ribosome function and has extra-ribosomal functions. Component of the GAIT (gamma interferon-activated inhibitor of translation) complex which mediates interferon-gamma-induced transcript-selective translation inhibition in inflammation processes. Upon interferon-gamma activation and subsequent phosphorylation dissociates from the ribosome and assembles into the GAIT complex which binds to stem loop-containing GAIT elements in the 3'-UTR of diverse inflammatory mRNAs (such as ceruplasmin) and suppresses their translation. In the GAIT complex interacts with m7G cap-bound eIF4G at or near the eIF3-binding site and blocks the recruitment of the 43S ribosomal complex. Involved in methylation of rRNA. The chain is Large ribosomal subunit protein uL13 (RPL13A) from Oryctolagus cuniculus (Rabbit).